We begin with the raw amino-acid sequence, 349 residues long: tRNA pseudouridine synthase D (349 aa).

Residue Phe26 coordinates substrate. Asp79 serves as the catalytic Nucleophile. Substrate is bound at residue Asn128. A TRUD domain is found at 154 to 302; sequence GVPNYFGSQR…VEGSRRAVLL (149 aa). Phe328 lines the substrate pocket.

Belongs to the pseudouridine synthase TruD family.

It catalyses the reaction uridine(13) in tRNA = pseudouridine(13) in tRNA. Its function is as follows. Responsible for synthesis of pseudouridine from uracil-13 in transfer RNAs. This chain is tRNA pseudouridine synthase D, found in Yersinia pseudotuberculosis serotype IB (strain PB1/+).